The sequence spans 259 residues: GTP cyclohydrolase FolE2 (259 aa).

Belongs to the GTP cyclohydrolase IV family.

The catalysed reaction is GTP + H2O = 7,8-dihydroneopterin 3'-triphosphate + formate + H(+). Its pathway is cofactor biosynthesis; 7,8-dihydroneopterin triphosphate biosynthesis; 7,8-dihydroneopterin triphosphate from GTP: step 1/1. Its function is as follows. Converts GTP to 7,8-dihydroneopterin triphosphate. The chain is GTP cyclohydrolase FolE2 from Thermosipho melanesiensis (strain DSM 12029 / CIP 104789 / BI429).